The following is a 602-amino-acid chain: Raftlin (602 aa).

Residue G2 is the site of N-myristoyl glycine attachment. C3 carries S-palmitoyl cysteine lipidation. Residues 178 to 195 (TPASNNSVQSRDNKNVSN) show a composition bias toward polar residues. Disordered stretches follow at residues 178–282 (TPAS…RCSK), 451–495 (KKES…EVTE), and 524–567 (NETA…QSAP). 2 stretches are compositionally biased toward basic and acidic residues: residues 197 to 209 (PEDH…EKID) and 244 to 265 (PDCK…REAP). Over residues 468-477 (KPMKKSRKTK) the composition is skewed to basic residues.

It belongs to the raftlin family.

Its subcellular location is the cell membrane. In terms of biological role, may play a pivotal role in the formation and/or maintenance of lipid rafts. May regulate B-cell antigen receptor-mediated signaling. This Gallus gallus (Chicken) protein is Raftlin (RFTN1).